A 465-amino-acid chain; its full sequence is Alpha-2A adrenergic receptor (465 aa).

Residues 1 to 48 lie on the Extracellular side of the membrane; the sequence is MFRQEQPLAEGSFAPMGSLQPDAGNSSWNGTEAPGGGTRATPYSLQVT. N25 and N29 each carry an N-linked (GlcNAc...) asparagine glycan. The chain crosses the membrane as a helical span at residues 49-74; it reads LTLVCLAGLLMLFTVFGNVLVIIAVF. Residues 75–85 are Cytoplasmic-facing; the sequence is TSRALKAPQNL. The chain crosses the membrane as a helical span at residues 86 to 111; that stretch reads FLVSLASADILVATLVIPFSLANEVM. Residues 112 to 121 are Extracellular-facing; it reads GYWYFGKVWC. The cysteines at positions 121 and 203 are disulfide-linked. The chain crosses the membrane as a helical span at residues 122-144; it reads EIYLALDVLFCTSSIVHLCAISL. Residues 145–164 lie on the Cytoplasmic side of the membrane; that stretch reads DRYWSITQAIEYNLKRTPRR. The helical transmembrane segment at 165–188 threads the bilayer; it reads IKAIIVTVWVISAVISFPPLISIE. Residues 189–207 are Extracellular-facing; the sequence is KKGAGGGQQPAEPSCKIND. Residues 208–232 form a helical membrane-spanning segment; that stretch reads QKWYVISSSIGSFFAPCLIMILVYV. The Cytoplasmic portion of the chain corresponds to 233-389; it reads RIYQIAKRRT…RQNREKRFTF (157 aa). The interval 242-377 is disordered; that stretch reads TRVPPSRRGP…RAGGAKASRW (136 aa). The segment covering 313–330 has biased composition (basic and acidic residues); sequence SSEHAERPQGPGKPERGP. S346 is subject to Phosphoserine. Positions 353-364 are enriched in gly residues; that stretch reads GAAGPGASGSGQ. R368 is subject to Omega-N-methylarginine. A helical membrane pass occupies residues 390-414; the sequence is VLAVVIGVFVVCWFPFFFTYTLIAV. Residues 415 to 424 lie on the Extracellular side of the membrane; the sequence is GCPVPYQLFN. Residues 425–445 traverse the membrane as a helical segment; the sequence is FFFWFGYCNSSLNPVIYTIFN. Residues 446 to 465 lie on the Cytoplasmic side of the membrane; the sequence is HDFRRAFKKILCRGDRKRIV. C457 carries the S-palmitoyl cysteine lipid modification.

Belongs to the G-protein coupled receptor 1 family. Adrenergic receptor subfamily. ADRA2A sub-subfamily. Expressed in brain.

The protein localises to the cell membrane. In terms of biological role, alpha-2 adrenergic receptors mediate the catecholamine-induced inhibition of adenylate cyclase through the action of G proteins. The polypeptide is Alpha-2A adrenergic receptor (Rattus norvegicus (Rat)).